A 101-amino-acid polypeptide reads, in one-letter code: Small ribosomal subunit protein uS14 (101 aa).

Belongs to the universal ribosomal protein uS14 family. As to quaternary structure, part of the 30S ribosomal subunit. Contacts proteins S3 and S10.

In terms of biological role, binds 16S rRNA, required for the assembly of 30S particles and may also be responsible for determining the conformation of the 16S rRNA at the A site. The chain is Small ribosomal subunit protein uS14 from Ralstonia pickettii (strain 12J).